A 155-amino-acid polypeptide reads, in one-letter code: MGRQVKVVTDNRRARHDYFIEETYEAGIALTGTEVKSLRNGRANIKDSYARVENGELILHDMHISPYEQGNRFNHEPRRPRRLLMHRYEIQRLYGKVREKGLTLIPLKVYFNERGLAKVELALVKGKRLYDKREDIAARDAQREIARALRERQKV.

The protein belongs to the SmpB family.

The protein localises to the cytoplasm. Functionally, required for rescue of stalled ribosomes mediated by trans-translation. Binds to transfer-messenger RNA (tmRNA), required for stable association of tmRNA with ribosomes. tmRNA and SmpB together mimic tRNA shape, replacing the anticodon stem-loop with SmpB. tmRNA is encoded by the ssrA gene; the 2 termini fold to resemble tRNA(Ala) and it encodes a 'tag peptide', a short internal open reading frame. During trans-translation Ala-aminoacylated tmRNA acts like a tRNA, entering the A-site of stalled ribosomes, displacing the stalled mRNA. The ribosome then switches to translate the ORF on the tmRNA; the nascent peptide is terminated with the 'tag peptide' encoded by the tmRNA and targeted for degradation. The ribosome is freed to recommence translation, which seems to be the essential function of trans-translation. This Moorella thermoacetica (strain ATCC 39073 / JCM 9320) protein is SsrA-binding protein.